Reading from the N-terminus, the 1006-residue chain is Transmembrane channel-like protein 5 (1006 aa).

A disordered region spans residues 1–289; the sequence is MSAYYRNNWS…DDPVGSLWGE (289 aa). Over 1–458 the chain is Extracellular; it reads MSAYYRNNWS…YFNFLRWLLK (458 aa). 3 stretches are compositionally biased toward polar residues: residues 20–30, 50–59, and 76–101; these read SGSQNRTQGYL, TRSNPYSVAS, and RSLSNPDYSGTRSNAYSAASRTSPDH. Over residues 138–149 the composition is skewed to low complexity; that stretch reads AGSSSSGNYAGS. Basic and acidic residues predominate over residues 239 to 250; the sequence is REPDYSDAENGH. The chain crosses the membrane as a helical span at residues 459–479; that stretch reads FNIFSFILNFSFIIIPQFTVA. Over 480 to 485 the chain is Cytoplasmic; that stretch reads KKNTLQ. The chain crosses the membrane as a helical span at residues 486–508; that stretch reads FTGLEFFTGVGYFRDTVMYYGFY. Residues 509 to 525 are Extracellular-facing; sequence TNSTIQHGNSGASYNMQ. A helical transmembrane segment spans residues 526–546; the sequence is LAYIFTIGACLTTCFFSLLFS. Topologically, residues 547–619 are cytoplasmic; that stretch reads MAKYFRNNFI…NQLLTRFSAY (73 aa). A helical transmembrane segment spans residues 620–640; sequence MVAWVVSTGVAIACCAAVYYL. The Extracellular segment spans residues 641–654; it reads AEYNLEFLKTHSNP. A helical membrane pass occupies residues 655–675; sequence GAVLLLPFVVSCINLAVPCIY. The Cytoplasmic portion of the chain corresponds to 676–698; that stretch reads SMFRLVERYEMPRHEVYVLLIRN. A helical membrane pass occupies residues 699–719; that stretch reads IFLKISIIGILCYYWLNTVAL. Over 720 to 732 the chain is Extracellular; the sequence is SGEECWETLIGQD. The helical transmembrane segment at 733-753 threads the bilayer; sequence IYRLLLMDFVFSLVNSFLGEF. The Cytoplasmic segment spans residues 754–786; it reads LRRIIGMQLITSLGLQEFDIARNVLELIYAQTL. Residues 787–807 traverse the membrane as a helical segment; the sequence is VWIGIFFCPLLPFIQMIMLFI. The Extracellular portion of the chain corresponds to 808–835; sequence MFYSKNISLMMNFQPPSKAWRASQMMTF. Residues 836–856 traverse the membrane as a helical segment; sequence FIFLLFFPSFTGVLCTLAITI. Residues 857 to 900 are Cytoplasmic-facing; sequence WRLKPSADCGPFRGLPLFIHSIYSWIDTLSTRPGYLWVVWIYRN. Residues 901–921 traverse the membrane as a helical segment; the sequence is LIGSVHFFFILTLIVLIITYL. The Extracellular portion of the chain corresponds to 922-1006; it reads YWQITEGRKI…RSVQEGNPRA (85 aa).

Belongs to the TMC family.

The protein localises to the membrane. In terms of biological role, probable component of an ion channel. Molecular function hasn't been characterized yet. This is Transmembrane channel-like protein 5 from Homo sapiens (Human).